Here is a 131-residue protein sequence, read N- to C-terminus: D-ribose pyranase (131 aa).

His-20 functions as the Proton donor in the catalytic mechanism. Substrate-binding positions include Asp-28, His-98, and 120 to 122 (YAN).

This sequence belongs to the RbsD / FucU family. RbsD subfamily. In terms of assembly, homodecamer.

Its subcellular location is the cytoplasm. The enzyme catalyses beta-D-ribopyranose = beta-D-ribofuranose. It participates in carbohydrate metabolism; D-ribose degradation; D-ribose 5-phosphate from beta-D-ribopyranose: step 1/2. Catalyzes the interconversion of beta-pyran and beta-furan forms of D-ribose. The sequence is that of D-ribose pyranase from Bacillus cereus (strain ZK / E33L).